A 37-amino-acid chain; its full sequence is Pi-theraphotoxin-Hm3a (37 aa).

Cystine bridges form between C3/C18, C10/C23, and C17/C33.

This sequence belongs to the psalmotoxin-1 family. Expressed by the venom gland.

It is found in the secreted. Functionally, this toxin acts on different isoforms of acid-sensing ion channel ASIC1 in a similar manner to psalmotoxin-1 (AC P60514). On ASIC1a homotrimer, it provokes a pH-dependent inhibition (IC(50)=39.7 nM on human and IC(50)=1.3 nM on rat channels), whereas it potentiates ASIC1b homotrimer and ASIC1a-ASIC1b heterotrimer (EC(50)=178.1 nM on human ASIC1b, EC(50)=46.5 nM on rat ASIC1b and EC(50)=17.4 nM on rat ASIC1a-ASIC1b channels). On rat ASIC1a, it acts by inhibiting channel currents by shifting the pH of half-maximal effect (pH(50)) of steady-state desensitization and activation to more alkaline values. This chain is Pi-theraphotoxin-Hm3a, found in Heteroscodra maculata (Togo starburst tarantula).